A 319-amino-acid chain; its full sequence is Acetyl-coenzyme A carboxylase carboxyl transferase subunit alpha (319 aa).

The 262-residue stretch at 32–293 (NVETEVRALR…KAVLLNELDA (262 aa)) folds into the CoA carboxyltransferase C-terminal domain.

The protein belongs to the AccA family. As to quaternary structure, acetyl-CoA carboxylase is a heterohexamer composed of biotin carboxyl carrier protein (AccB), biotin carboxylase (AccC) and two subunits each of ACCase subunit alpha (AccA) and ACCase subunit beta (AccD).

The protein resides in the cytoplasm. The catalysed reaction is N(6)-carboxybiotinyl-L-lysyl-[protein] + acetyl-CoA = N(6)-biotinyl-L-lysyl-[protein] + malonyl-CoA. It participates in lipid metabolism; malonyl-CoA biosynthesis; malonyl-CoA from acetyl-CoA: step 1/1. Functionally, component of the acetyl coenzyme A carboxylase (ACC) complex. First, biotin carboxylase catalyzes the carboxylation of biotin on its carrier protein (BCCP) and then the CO(2) group is transferred by the carboxyltransferase to acetyl-CoA to form malonyl-CoA. The chain is Acetyl-coenzyme A carboxylase carboxyl transferase subunit alpha from Xanthomonas axonopodis pv. citri (strain 306).